Consider the following 501-residue polypeptide: Capsid protein (501 aa).

Positions Ser78–Gly98 are disordered. The Nuclear localization signal motif lies at Lys122 to Phe125. The segment at Cys431 to Lys448 adopts a CCHC-type zinc-finger fold.

The protein belongs to the caulimoviridae capsid protein family. Interacts (via nuclear localization signal) with host importin alpha.

The protein localises to the virion. The protein resides in the host nucleus. Self assembles to form an icosahedral capsid, about 50 nm in diameter, nm, composed of 420 subunits of the viral capsid protein. The capsid encapsulates the genomic dsDNA. Following virus entry into host cell, provides nuclear import of the viral genome. Virus particles do not enter the nucleus, but dock at the nuclear membrane through the interaction with host importins. This Cestrum parqui (CmYLCV) protein is Capsid protein.